A 79-amino-acid polypeptide reads, in one-letter code: Quinohemoprotein amine dehydrogenase subunit gamma (79 aa).

Residues 7–16 (CTATTDPGWE) constitute a cross-link (4-cysteinyl-glutamic acid (Cys-Glu)). 2 cross-links (3-cysteinyl-aspartic acid (Cys-Asp)) span residues 27–33 (CQPMEAD) and 41–49 (CWWPAQVPD). Asp-33 serves as the catalytic Proton acceptor. A cross-link (4'-cysteinyl-tryptophylquinone (Cys-Trp)) is located at residues 37-43 (CSDPCWW). Trp-43 is subject to Tryptophylquinone.

It belongs to the quinohemoprotein amine dehydrogenase subunit gamma family. Heterotrimer of an alpha, a beta and a gamma subunit. The cofactor is cysteine tryptophylquinone residue. The cysteine tryptophylquinone (CTQ) is generated by oxidation of the indole ring of a tryptophan residue to form tryptophylquinone, followed by covalent cross-linking with a cysteine residue.

Its subcellular location is the periplasm. It catalyses the reaction an aliphatic amine + A + H2O = an aldehyde + AH2 + NH4(+). In terms of biological role, catalyzes the oxidative deamination of a wide range of aliphatic monoamines and diamines. The physiological electron acceptor is an azurin-like blue protein. The polypeptide is Quinohemoprotein amine dehydrogenase subunit gamma (qhnDH) (Pseudomonas putida (strain ATCC 47054 / DSM 6125 / CFBP 8728 / NCIMB 11950 / KT2440)).